The primary structure comprises 473 residues: Photosystem II CP43 reaction center protein (473 aa).

Positions 1 to 14 (MKTLYSLRRFYHVE) are excised as a propeptide. N-acetylthreonine is present on Thr15. Phosphothreonine is present on Thr15. 5 consecutive transmembrane segments (helical) span residues 69 to 93 (LFEV…PHLA), 134 to 155 (LLGP…KDRN), 178 to 200 (KALF…RKIT), 255 to 275 (KPFA…LSYS), and 291 to 312 (WFNN…ASQA). Glu367 is a [CaMn4O5] cluster binding site. The helical transmembrane segment at 447–471 (RARAAAAGFEKGIDRDFEPVLSMTP) threads the bilayer.

This sequence belongs to the PsbB/PsbC family. PsbC subfamily. As to quaternary structure, PSII is composed of 1 copy each of membrane proteins PsbA, PsbB, PsbC, PsbD, PsbE, PsbF, PsbH, PsbI, PsbJ, PsbK, PsbL, PsbM, PsbT, PsbX, PsbY, PsbZ, Psb30/Ycf12, at least 3 peripheral proteins of the oxygen-evolving complex and a large number of cofactors. It forms dimeric complexes. Binds multiple chlorophylls and provides some of the ligands for the Ca-4Mn-5O cluster of the oxygen-evolving complex. It may also provide a ligand for a Cl- that is required for oxygen evolution. PSII binds additional chlorophylls, carotenoids and specific lipids. serves as cofactor.

The protein localises to the plastid. It localises to the chloroplast thylakoid membrane. Functionally, one of the components of the core complex of photosystem II (PSII). It binds chlorophyll and helps catalyze the primary light-induced photochemical processes of PSII. PSII is a light-driven water:plastoquinone oxidoreductase, using light energy to abstract electrons from H(2)O, generating O(2) and a proton gradient subsequently used for ATP formation. This chain is Photosystem II CP43 reaction center protein, found in Fagopyrum esculentum subsp. ancestrale (Wild buckwheat).